The following is a 414-amino-acid chain: COUP transcription factor 2 (414 aa).

Residues 1–72 are disordered; it reads MAMVVSTWRD…PGGPGSDKQQ (72 aa). Pro residues predominate over residues 27-37; sequence PPVPGPPPGAP. Low complexity predominate over residues 38 to 57; sequence HTPQTPGQGGPASTPAQTAA. Threonine 51 is modified (phosphothreonine). Positions 58 to 67 are enriched in gly residues; that stretch reads GGQGGPGGPG. Residues 76–151 constitute a DNA-binding region (nuclear receptor); that stretch reads HIECVVCGDK…VGMRREAVQR (76 aa). NR C4-type zinc fingers lie at residues 79 to 99 and 115 to 139; these read CVVCGDKSSGKHYGQFTCEGC and CRANRNCPIDQHHRNQCQYCRLKKC. An interaction with ZFPM2 region spans residues 117-414; it reads ANRNCPIDQH…SFNWPYMAIQ (298 aa). The 227-residue stretch at 177–403 folds into the NR LBD domain; it reads YLSGYISLLL…TLIRDMLLSG (227 aa). The segment at 337 to 414 is important for dimerization; that stretch reads LQEKSQCALE…SFNWPYMAIQ (78 aa).

It belongs to the nuclear hormone receptor family. NR2 subfamily. In terms of assembly, interacts with SQSTM1. Binds DNA as a dimer; homodimer or heterodimer with NR2F6. Interacts with NCOA1, NCOA2, NCOA3 and PPARGC1A. Interacts with ZFPM2. As to expression, ubiquitous. Expressed in the stromal cells of developing fetal ovaries.

It is found in the nucleus. Functionally, ligand-activated transcription factor. Activated by high concentrations of 9-cis-retinoic acid and all-trans-retinoic acid, but not by dexamethasone, cortisol or progesterone (in vitro). Regulation of the apolipoprotein A-I gene transcription. Binds to DNA site A. May be required to establish ovary identity during early gonad development. The polypeptide is COUP transcription factor 2 (NR2F2) (Homo sapiens (Human)).